The sequence spans 33 residues: Brevinin-2E (33 aa).

An intrachain disulfide couples Cys-27 to Cys-33.

Belongs to the frog skin active peptide (FSAP) family. Brevinin subfamily. In terms of tissue distribution, expressed by the skin glands.

The protein localises to the secreted. In terms of biological role, shows antibacterial activity against representative Gram-negative and Gram-positive bacterial species, and hemolytic activity. The sequence is that of Brevinin-2E from Pelophylax lessonae (Pool frog).